Consider the following 194-residue polypeptide: Adenylate kinase (194 aa).

Position 8 to 16 (8 to 16 (GIPGVGKST)) interacts with ATP.

This sequence belongs to the archaeal adenylate kinase family. In terms of assembly, homotrimer.

Its subcellular location is the cytoplasm. It catalyses the reaction AMP + ATP = 2 ADP. This is Adenylate kinase (adkA) from Sulfolobus acidocaldarius (strain ATCC 33909 / DSM 639 / JCM 8929 / NBRC 15157 / NCIMB 11770).